A 172-amino-acid polypeptide reads, in one-letter code: Protein nemuri (172 aa).

Positions 1–25 (MSAKYTLIFALAALCCLVFSTEAAA) are cleaved as a signal peptide. Residues 27-172 (RSRVLSSRRG…KRRSGKGNKA (146 aa)) are disordered. Composition is skewed to basic and acidic residues over residues 35 to 50 (RGSE…KEDS), 58 to 90 (DLER…DKET), and 97 to 108 (TIVKPNKDDARA). Residues 45 to 74 (DNKEDSELAAQEQDLERQEQEEQNDRLEGR) adopt a coiled-coil conformation. Basic residues predominate over residues 109–172 (RRIVRAGRRR…KRRSGKGNKA (64 aa)).

As to expression, detected in the brain where it accumulates in the dorsal fan-shaped body following sleep deprivation (at protein level). Expressed in the adult body.

The protein resides in the secreted. Functionally, antimicrobial protein which is essential for the homeostatic regulation of sleep. Promotes sleep following sleep deprivation or bacterial infection and increases survival following bacterial infection. Likely to promote survival to bacterial infection in two ways; by contributing to the innate immune response and by promoting sleep during sickness to aid recovery. The polypeptide is Protein nemuri (Drosophila melanogaster (Fruit fly)).